A 959-amino-acid polypeptide reads, in one-letter code: Translation initiation factor IF-2 (959 aa).

Basic and acidic residues predominate over residues 1 to 10 (MSDKTNDDKT). The disordered stretch occupies residues 1–374 (MSDKTNDDKT…SQMQETREKI (374 aa)). The segment covering 27–37 (EQSTVRQNFSH) has biased composition (polar residues). Low complexity-rich tracts occupy residues 63-118 (AAAA…VTKP) and 128-138 (QRPGGQQAQRP). 2 stretches are compositionally biased toward basic and acidic residues: residues 154 to 225 (SEMD…EAAK) and 232 to 241 (ARSERRDDAR). Positions 246 to 284 (GARPQQAGRPQGGRPQPAGRPQQGSPRPAPIIADAAPIA) are enriched in low complexity. Positions 318–333 (PEVRAPKVVKGEDDRR) are enriched in basic and acidic residues. One can recognise a tr-type G domain in the interval 457 to 626 (SRPPVVTIMG…LLQAEMLDLK (170 aa)). A G1 region spans residues 466–473 (GHVDHGKT). 466–473 (GHVDHGKT) contacts GTP. The interval 491–495 (GITQH) is G2. Residues 512-515 (DTPG) form a G3 region. Residues 512–516 (DTPGH) and 566–569 (NKID) each bind GTP. Residues 566–569 (NKID) form a G4 region. Residues 602-604 (SAK) form a G5 region.

This sequence belongs to the TRAFAC class translation factor GTPase superfamily. Classic translation factor GTPase family. IF-2 subfamily.

The protein localises to the cytoplasm. In terms of biological role, one of the essential components for the initiation of protein synthesis. Protects formylmethionyl-tRNA from spontaneous hydrolysis and promotes its binding to the 30S ribosomal subunits. Also involved in the hydrolysis of GTP during the formation of the 70S ribosomal complex. The sequence is that of Translation initiation factor IF-2 from Brucella suis biovar 1 (strain 1330).